Here is a 237-residue protein sequence, read N- to C-terminus: Ribonuclease PH (237 aa).

Residues Arg86 and Gly124–Arg126 each bind phosphate.

This sequence belongs to the RNase PH family. Homohexameric ring arranged as a trimer of dimers.

The catalysed reaction is tRNA(n+1) + phosphate = tRNA(n) + a ribonucleoside 5'-diphosphate. Its function is as follows. Phosphorolytic 3'-5' exoribonuclease that plays an important role in tRNA 3'-end maturation. Removes nucleotide residues following the 3'-CCA terminus of tRNAs; can also add nucleotides to the ends of RNA molecules by using nucleoside diphosphates as substrates, but this may not be physiologically important. Probably plays a role in initiation of 16S rRNA degradation (leading to ribosome degradation) during starvation. The chain is Ribonuclease PH from Myxococcus xanthus (strain DK1622).